A 176-amino-acid polypeptide reads, in one-letter code: Sigma intracellular receptor 2 (176 aa).

Residues 1 to 9 (MGALAARRC) lie on the Cytoplasmic side of the membrane. The helical transmembrane segment at 10–30 (VEWLLGLYFVSHIPITLFIDL) threads the bilayer. The region spanning 10–158 (VEWLLGLYFV…PYLIIPLILL (149 aa)) is the EXPERA domain. Over 31 to 68 (QAVLPPELYPQEFSNLLRWYSKEFKDPLMQEPPVWFKS) the chain is Lumenal. The helical transmembrane segment at 69-89 (FLLCELVFQLPFFPIAAYAFF) threads the bilayer. Cholesterol-binding residues include V75 and Q77. The Cytoplasmic portion of the chain corresponds to 90-99 (KGSCRWIRIP). Residues 100-120 (AIIYAAHTITTLIPILYTLLF) traverse the membrane as a helical segment. At 121 to 140 (EDFSKAVAFKGQRPESFRER) the chain is on the lumenal side. A helical membrane pass occupies residues 141-161 (LTLVGVYAPYLIIPLILLLFM). The Cytoplasmic segment spans residues 162–176 (LRNPYYKYEEKRKKK). Positions 172 to 176 (KRKKK) match the ER retention motif motif.

This sequence belongs to the TMEM97/sigma-2 receptor family. As to quaternary structure, homodimer. Interacts with NPC1; the interaction impairs NPC1-mediated cholesterol transport. Interacts with PGRMC1 and LDLR; the interaction increases LDL internalization. Interacts with histatin 1/HTN1; the interaction induces HTN1-stimulating wound healing. Interacts with TSPO.

The protein localises to the rough endoplasmic reticulum membrane. The protein resides in the nucleus membrane. Sigma-2 receptor which contributes to ameliorate dysfunctional cellular processes and slow degenerative progression by regulating cell functions including cholesterol biosynthesis/trafficking, membrane trafficking, autophagy, lipid membrane-bound protein trafficking, and receptor stabilization at the cell surface. Forms a ternary complex with PGRMC1 receptor and low density lipoprotein receptor/LDLR at the plasma membrane, which increases LDLR-mediated LDL cholesterol internalization. Decreases lysosomal sterol transporter NPC1 availability to the cell, probably through NPC1-binding, hence controlling lipid transport, including cholesterol and LBPA, outside of late endosome/lysosome. Binds regio- and stereoselective ligand 20(S)-hydroxycholesterol (20(S)-OHC) which enhances TMEM97-NPC1 interaction and decreases TMEM97-PGRMC1 and TMEM97-TSPO interactions, thereby linking OHC binding to cholesterol homeostasis. Also able to bind cholesterol. Binds histatin 1 (Hst 1)/HN1 salivary peptide at the ER membrane, which is critical for increasing mitochondria-ER contacts and stimulating Hst1 wound healing properties. May alter the activity of some cytochrome P450 proteins. Although shows homologies with sterol isomerases (EXPERA domain), not able to catalyze sterol isomerization. However, may act as sensors of these molecules. Acts as a quality control factor in the ER, promoting the proteolytic degradation of nonproductive and extramitochondrial precursor proteins in the ER membrane thus removing them from the ER surface. The sequence is that of Sigma intracellular receptor 2 from Mus musculus (Mouse).